A 497-amino-acid chain; its full sequence is Intermediate filament protein A (497 aa).

The coil 1A stretch occupies residues 1–32 (MSDLNDRLASYIEKVRFLEAQNRKLAADLDLL). An IF rod domain is found at 1 to 342 (MSDLNDRLAS…KMLEGEENRA (342 aa)). The linker 1 stretch occupies residues 33-46 (RGRWGKDTLSVRAM). The interval 47–184 (YEGELQEARK…RVHDQEIAEL (138 aa)) is coil 1B. Positions 185–202 (QAMASRDTTPENREYFKN) are linker 12. Residues 203–342 (ELASAIRDIR…KMLEGEENRA (140 aa)) form a coil 2 region. Residues 343–497 (GLRQLVEQVV…THIQRSSHTI (155 aa)) are tail. Residues 375–493 (SRTSFQRSAK…EERATHIQRS (119 aa)) enclose the LTD domain.

Belongs to the intermediate filament family. In terms of assembly, a and B can form homopolymers. Giant body muscle cells.

Its subcellular location is the cytoplasm. This is Intermediate filament protein A from Ascaris suum (Pig roundworm).